A 375-amino-acid chain; its full sequence is tRNA(Met) cytidine acetate ligase (375 aa).

Residues 7–20 (VVEY…HRYH), G101, N151, and R176 each bind ATP.

This sequence belongs to the TmcAL family.

The protein resides in the cytoplasm. The catalysed reaction is cytidine(34) in elongator tRNA(Met) + acetate + ATP = N(4)-acetylcytidine(34) in elongator tRNA(Met) + AMP + diphosphate. Catalyzes the formation of N(4)-acetylcytidine (ac(4)C) at the wobble position of elongator tRNA(Met), using acetate and ATP as substrates. First activates an acetate ion to form acetyladenylate (Ac-AMP) and then transfers the acetyl group to tRNA to form ac(4)C34. In Limosilactobacillus fermentum (strain NBRC 3956 / LMG 18251) (Lactobacillus fermentum), this protein is tRNA(Met) cytidine acetate ligase.